The sequence spans 232 residues: Ubiquinone biosynthesis O-methyltransferase (232 aa).

The S-adenosyl-L-methionine site is built by R36, G55, D76, and M120.

The protein belongs to the methyltransferase superfamily. UbiG/COQ3 family.

It catalyses the reaction a 3-demethylubiquinol + S-adenosyl-L-methionine = a ubiquinol + S-adenosyl-L-homocysteine + H(+). The catalysed reaction is a 3-(all-trans-polyprenyl)benzene-1,2-diol + S-adenosyl-L-methionine = a 2-methoxy-6-(all-trans-polyprenyl)phenol + S-adenosyl-L-homocysteine + H(+). Its pathway is cofactor biosynthesis; ubiquinone biosynthesis. In terms of biological role, O-methyltransferase that catalyzes the 2 O-methylation steps in the ubiquinone biosynthetic pathway. This Burkholderia cenocepacia (strain ATCC BAA-245 / DSM 16553 / LMG 16656 / NCTC 13227 / J2315 / CF5610) (Burkholderia cepacia (strain J2315)) protein is Ubiquinone biosynthesis O-methyltransferase.